A 211-amino-acid chain; its full sequence is Thiamine-phosphate synthase (211 aa).

4-amino-2-methyl-5-(diphosphooxymethyl)pyrimidine-binding positions include 36–40 (QLREK) and Asn-68. Residues Asp-69 and Asp-88 each coordinate Mg(2+). Position 107 (Ser-107) interacts with 4-amino-2-methyl-5-(diphosphooxymethyl)pyrimidine. Position 133–135 (133–135 (TGS)) interacts with 2-[(2R,5Z)-2-carboxy-4-methylthiazol-5(2H)-ylidene]ethyl phosphate. Lys-136 contacts 4-amino-2-methyl-5-(diphosphooxymethyl)pyrimidine. Residues Gly-167 and 187-188 (IT) each bind 2-[(2R,5Z)-2-carboxy-4-methylthiazol-5(2H)-ylidene]ethyl phosphate.

Belongs to the thiamine-phosphate synthase family. The cofactor is Mg(2+).

It catalyses the reaction 2-[(2R,5Z)-2-carboxy-4-methylthiazol-5(2H)-ylidene]ethyl phosphate + 4-amino-2-methyl-5-(diphosphooxymethyl)pyrimidine + 2 H(+) = thiamine phosphate + CO2 + diphosphate. The enzyme catalyses 2-(2-carboxy-4-methylthiazol-5-yl)ethyl phosphate + 4-amino-2-methyl-5-(diphosphooxymethyl)pyrimidine + 2 H(+) = thiamine phosphate + CO2 + diphosphate. The catalysed reaction is 4-methyl-5-(2-phosphooxyethyl)-thiazole + 4-amino-2-methyl-5-(diphosphooxymethyl)pyrimidine + H(+) = thiamine phosphate + diphosphate. The protein operates within cofactor biosynthesis; thiamine diphosphate biosynthesis; thiamine phosphate from 4-amino-2-methyl-5-diphosphomethylpyrimidine and 4-methyl-5-(2-phosphoethyl)-thiazole: step 1/1. Its function is as follows. Condenses 4-methyl-5-(beta-hydroxyethyl)thiazole monophosphate (THZ-P) and 2-methyl-4-amino-5-hydroxymethyl pyrimidine pyrophosphate (HMP-PP) to form thiamine monophosphate (TMP). This is Thiamine-phosphate synthase from Haloarcula marismortui (strain ATCC 43049 / DSM 3752 / JCM 8966 / VKM B-1809) (Halobacterium marismortui).